The sequence spans 1544 residues: Lysine-specific demethylase 5B (1544 aa).

Residues 1 to 14 (MEPATTLPPGPRPA) are compositionally biased toward pro residues. The tract at residues 1-22 (MEPATTLPPGPRPALPLGGPGP) is disordered. Positions 32–73 (CPVFEPSWEEFADPFAFIHKIRPIAEQTGICKVRPPPDWQPP) constitute a JmjN domain. The region spanning 97 to 187 (TRVKLNFLDQ…ILNPYNLFLS (91 aa)) is the ARID domain. Residues Lys-148, Lys-204, Lys-209, Lys-242, Lys-274, and Lys-278 each participate in a glycyl lysine isopeptide (Lys-Gly) (interchain with G-Cter in SUMO2) cross-link. Residues 200–228 (TSDTKDKEYKPHDIPQRQSVQPAETCPPA) form a disordered region. A compositionally biased stretch (basic and acidic residues) spans 202–214 (DTKDKEYKPHDIP). Residues 269–297 (NEKEMKSTIKQEPTEKKDCELESEKEKPK) form a disordered region. The segment at 309–359 (LYVCLLCGSGNDEDRLLLCDGCDDSYHTFCLVPPLHDVPKGDWRCPKCLAQ) adopts a PHD-type 1 zinc-finger fold. Tyr-425 contributes to the 2-oxoglutarate binding site. Residues 453-619 (EYLDSGWNLN…LGRQCVEHYR (167 aa)) form the JmjC domain. Residues His-499 and Glu-501 each contribute to the Fe cation site. 2-oxoglutarate contacts are provided by Ser-507, Asn-509, and Lys-517. His-587 is a Fe cation binding site. The C5HC2 zinc-finger motif lies at 692–744 (CIKCKTTCFMSAISCSCKPGLLVCLHHVKELCSCPPYKYNLRYRYTLDDLYPM). Lys-769 is covalently cross-linked (Glycyl lysine isopeptide (Lys-Gly) (interchain with G-Cter in SUMO2)). N6-acetyllysine is present on Lys-832. Ser-986 carries the phosphoserine modification. The PHD-type 2 zinc finger occupies 1176–1224 (MKVCLCQKTPATPMIQCELCRDAFHTSCVAAPSISQSSRIWLCPHCRRS). Positions 1297–1314 (QASATDKVSQPPGTTSFS) are enriched in polar residues. Residues 1297–1318 (QASATDKVSQPPGTTSFSLPDD) form a disordered region. Ser-1328 is modified (phosphoserine). Positions 1374–1388 (PSSVQQADRSSPVRS) are enriched in polar residues. Residues 1374–1447 (PSSVQQADRS…IKLSHPKDMD (74 aa)) form a disordered region. A compositionally biased stretch (basic and acidic residues) spans 1389-1427 (SSEKNDCLRGKRDAINSPERKLKRRPEREGLPSERWDRV). Positions 1428 to 1441 (KHMRTPQKKKIKLS) are enriched in basic residues. Lys-1450 is covalently cross-linked (Glycyl lysine isopeptide (Lys-Gly) (interchain with G-Cter in SUMO2)). Ser-1456 is subject to Phosphoserine. The segment at 1484–1538 (DAICPAVSCLQPEGDEVDWVQCDGSCNQWFHQVCVGVSPEMAEKEDYICVRCTGK) adopts a PHD-type 3 zinc-finger fold.

It belongs to the JARID1 histone demethylase family. As to quaternary structure, interacts with FOXG1B, PAX9, MYC, MYCN and RB1. Interacts with HDAC1, HDAC4, HDAC5 and HDAC7. Interacts (via PHD-type 1 zinc finger) with histone H3 unmodified at 'Lys-4'; the interaction is inhibited when histone H3 is methylated at 'Arg-2' or 'Lys-4'. Fe(2+) serves as cofactor. Present at highest levels in testis, where it is enriched in spermatogonia and pachytene cells (at protein level).

It is found in the nucleus. It carries out the reaction N(6),N(6),N(6)-trimethyl-L-lysyl(4)-[histone H3] + 3 2-oxoglutarate + 3 O2 = L-lysyl(4)-[histone H3] + 3 formaldehyde + 3 succinate + 3 CO2. Functionally, histone demethylase that demethylates 'Lys-4' of histone H3, thereby playing a central role in histone code. Does not demethylate histone H3 'Lys-9' or H3 'Lys-27'. Demethylates trimethylated, dimethylated and monomethylated H3 'Lys-4'. Acts as a transcriptional corepressor for FOXG1B and PAX9. Represses the CLOCK-BMAL1 heterodimer-mediated transcriptional activation of the core clock component PER2. The protein is Lysine-specific demethylase 5B (Kdm5b) of Mus musculus (Mouse).